Here is a 338-residue protein sequence, read N- to C-terminus: Solute carrier family 35 member G5 (338 aa).

Positions 1 to 21 (MAGSHPYFNLPDSTHPSPPSA) are disordered. The next 9 helical transmembrane spans lie at 37 to 57 (TNGL…VGPL), 67 to 87 (LPSL…ALPL), 105 to 125 (CFCA…VQVV), 160 to 180 (CGLL…LWTL), 190 to 210 (ALGY…LLVY), 221 to 241 (TVAF…LFVL), 250 to 270 (LLSW…FTCV), 281 to 301 (LVCA…YYVL), and 305 to 325 (VAPF…IITA). Residues 49–174 (LPAGFVGPLS…SILGLIIIVG (126 aa)) form the EamA 1 domain. In terms of domain architecture, EamA 2 spans 272 to 325 (YAVTKAHPALVCAVLHSEVVVALILQYYVLHETVAPFDITGAGIVLGSIAIITA).

The protein belongs to the SLC35G solute transporter family.

The protein resides in the membrane. This is Solute carrier family 35 member G5 (SLC35G5) from Pan paniscus (Pygmy chimpanzee).